The primary structure comprises 289 residues: Inorganic pyrophosphatase (289 aa).

Residue Arg80 coordinates diphosphate. Mg(2+) is bound by residues Asp117, Asp122, and Asp154.

It belongs to the PPase family. Homodimer. Mg(2+) is required as a cofactor.

It is found in the cytoplasm. It carries out the reaction diphosphate + H2O = 2 phosphate + H(+). In Schizosaccharomyces pombe (strain 972 / ATCC 24843) (Fission yeast), this protein is Inorganic pyrophosphatase (ppa1).